Here is a 55-residue protein sequence, read N- to C-terminus: Large ribosomal subunit protein eL40 (55 aa).

Belongs to the eukaryotic ribosomal protein eL40 family.

The sequence is that of Large ribosomal subunit protein eL40 from Ignicoccus hospitalis (strain KIN4/I / DSM 18386 / JCM 14125).